The sequence spans 255 residues: MRNSVQSDLKYINIINISETLYLFYSTGLDTLEYIDSTYKNFIIMYVNQHLLYGTTLKYLSVGEFFINSLTIFINGIRETMTSSTVIMYAIFGMFIFSEIMVFSTFIWGFFHFRLSNPVMIIEVNLEAFLQISDVLNAGSILISLILQRIEERGYFEVDYMLERLILIGFIFLSFQGDEYSLVKSYINNHWVTLYFNVLTGLHSLHVYVGGIFALMQAFASENCGCQKDEDFNAGMYWHFVEIIWIALTMLLFLL.

7 consecutive transmembrane segments (helical) span residues 12–29 (INII…STGL), 57–77 (LKYL…INGI), 91–111 (IFGM…WGFF), 126–146 (LEAF…ISLI), 155–175 (YFEV…FLSF), 196–216 (FNVL…FALM), and 235–255 (GMYW…LFLL).

The protein belongs to the cytochrome c oxidase subunit 3 family. Component of the cytochrome c oxidase (complex IV, CIV), a multisubunit enzyme composed of a catalytic core of 3 subunits and several supernumerary subunits. The complex exists as a monomer or a dimer and forms supercomplexes (SCs) in the inner mitochondrial membrane with ubiquinol-cytochrome c oxidoreductase (cytochrome b-c1 complex, complex III, CIII).

The protein localises to the mitochondrion inner membrane. The catalysed reaction is 4 Fe(II)-[cytochrome c] + O2 + 8 H(+)(in) = 4 Fe(III)-[cytochrome c] + 2 H2O + 4 H(+)(out). Component of the cytochrome c oxidase, the last enzyme in the mitochondrial electron transport chain which drives oxidative phosphorylation. The respiratory chain contains 3 multisubunit complexes succinate dehydrogenase (complex II, CII), ubiquinol-cytochrome c oxidoreductase (cytochrome b-c1 complex, complex III, CIII) and cytochrome c oxidase (complex IV, CIV), that cooperate to transfer electrons derived from NADH and succinate to molecular oxygen, creating an electrochemical gradient over the inner membrane that drives transmembrane transport and the ATP synthase. Cytochrome c oxidase is the component of the respiratory chain that catalyzes the reduction of oxygen to water. Electrons originating from reduced cytochrome c in the intermembrane space (IMS) are transferred via the dinuclear copper A center (CU(A)) of subunit 2 and heme A of subunit 1 to the active site in subunit 1, a binuclear center (BNC) formed by heme A3 and copper B (CU(B)). The BNC reduces molecular oxygen to 2 water molecules using 4 electrons from cytochrome c in the IMS and 4 protons from the mitochondrial matrix. This chain is Cytochrome c oxidase subunit 3 (MT-CO3), found in Theileria annulata.